The primary structure comprises 329 residues: MVQAKSWTLKKHFEGFPTDGNFELKTTELPPLNNGEVLLEALFLSVDPYMRVAAKKLKEGDRMMGEQVARVVESKNSAFPKGTIVAALLGWTSHSISDGNGLTKLPVEWPDKLPLSLALGTVGMPGLTAYFGLLDICGVKGGETVMVSAAAGAVGSVVGQIAKLKGCKVVGTAGSDEKVAYLKKLGFDVAFNYKTVKSLEEALRTASPDGYDCYFDNVGGEFSNAVILQMKTFGRIAICGAISQYNRTGPCPQGPAPEVVIYQQLRMEGFIVNRWQGEVRQKALTELMNWVSEGKVQCHEYVTEGFEKMPAAFMGMLKGENLGKTIVKA.

T18 bears the Phosphothreonine mark. Residues 152-155, K178, Y193, N217, 239-245, 270-272, and N321 each bind NADP(+); these read GAVG, CGAISQY, and FIV. At K178 the chain carries N6-(2-hydroxyisobutyryl)lysine; alternate. K178 carries the N6-acetyllysine; alternate modification.

Belongs to the NADP-dependent oxidoreductase L4BD family. As to quaternary structure, monomer or homodimer.

The protein resides in the cytoplasm. It catalyses the reaction 13,14-dihydro-15-oxo-prostaglandin E1 + NADP(+) = 15-oxoprostaglandin E1 + NADPH + H(+). It carries out the reaction 13,14-dihydro-15-oxo-prostaglandin E2 + NADP(+) = 15-oxoprostaglandin E2 + NADPH + H(+). The enzyme catalyses 13,14-dihydro-15-oxo-prostaglandin F1alpha + NADP(+) = 15-oxoprostaglandin F1alpha + NADPH + H(+). The catalysed reaction is 13,14-dihydro-15-oxo-PGF2alpha + NADP(+) = 15-oxoprostaglandin F2alpha + NADPH + H(+). It catalyses the reaction leukotriene B4 + NADP(+) = 12-oxo-leukotriene B4 + NADPH + H(+). It carries out the reaction 20-hydroxy-leukotriene B4 + NADP(+) = 12-oxo-20-hydroxy-leukotriene B4 + NADPH + H(+). The enzyme catalyses 6-trans-leukotriene B4 + NADP(+) = 12-oxo-(5S)-hydroxy-(6E,8E,10E,14Z)-eicosatetraenoate + NADPH + H(+). The catalysed reaction is (5S,12S)-dihydroxy-(6E,10E,12E,14Z)-eicosatetraenoate + NADP(+) = 12-oxo-(5S)-hydroxy-(6E,8E,10E,14Z)-eicosatetraenoate + NADPH + H(+). It catalyses the reaction an n-alkanal + NADP(+) = an alk-2-enal + NADPH + H(+). It carries out the reaction hexanal + NADP(+) = (E)-hex-2-enal + NADPH + H(+). The enzyme catalyses octanal + NADP(+) = (2E)-octenal + NADPH + H(+). The catalysed reaction is decanal + NADP(+) = (2E)-decenal + NADPH + H(+). It catalyses the reaction dodecanal + NADP(+) = (2E)-dodecenal + NADPH + H(+). It carries out the reaction 4-hydroxynonanal + NADP(+) = (E)-4-hydroxynon-2-enal + NADPH + H(+). The enzyme catalyses pentan-2-one + NADP(+) = (E)-pent-3-en-2-one + NADPH + H(+). The catalysed reaction is nonan-2-one + NADP(+) = (3E)-nonen-2-one + NADPH + H(+). In terms of biological role, NAD(P)H-dependent oxidoreductase involved in metabolic inactivation of pro- and anti-inflammatory eicosanoids: prostaglandins (PG), leukotrienes (LT) and lipoxins (LX). Catalyzes with high efficiency the reduction of the 13,14 double bond of 15-oxoPGs, including 15-oxo-PGE1, 15-oxo-PGE2, 15-oxo-PGF1-alpha and 15-oxo-PGF2-alpha. Catalyzes with lower efficiency the oxidation of the hydroxyl group at C12 of LTB4 and its derivatives, converting them into biologically less active 12-oxo-LTB4 metabolites. Reduces 15-oxo-LXA4 to 13,14 dihydro-15-oxo-LXA4, enhancing neutrophil recruitment at the inflammatory site. Plays a role in metabolic detoxification of alkenals and ketones. Reduces alpha,beta-unsaturated alkenals and ketones, particularly those with medium-chain length, showing highest affinity toward (2E)-decenal and (3E)-3-nonen-2-one. May inactivate 4-hydroxy-2-nonenal, a cytotoxic lipid constituent of oxidized low-density lipoprotein particles. The chain is Prostaglandin reductase 1 (Ptgr1) from Mus musculus (Mouse).